The sequence spans 366 residues: MTPEHLPTEQYEAQLAEKVVRLQSMMAPFSDLVPEVFRSPVSHYRMRAEFRIWHDGDDLYHIIFDQQTKSRIRVDSFPAASELINQLMTAMIAGVRNNPVLRHKLFQIDYLTTLSNQAVVSLLYHKKLDDEWRQEAEALRDALRAQNLNVHLIGRATKTKIALDQDYIDERLPVAGKEMIYRQVENSFTQPNAAMNIQMLEWALDVTKGSKGDLLELYCGNGNFSLALAHNFDRVLATEIAKPSVAAAQYNIAANHIDNVQIIRMAAEEFTQAMNGVREFNRLQGIDLKSYQCETIFVDPPRSGLDSETEKMVQAYPRILYISCNPETLCKNLETLSQTHKVERLALFDQFPYTHHMECGVLLTAK.

Residues Gln-190, Tyr-218, Asn-223, Glu-239, and Asp-299 each coordinate S-adenosyl-L-methionine. Cys-324 (nucleophile) is an active-site residue. The active-site Proton acceptor is Glu-358.

The protein belongs to the class I-like SAM-binding methyltransferase superfamily. RNA M5U methyltransferase family. TrmA subfamily.

The catalysed reaction is uridine(54) in tRNA + S-adenosyl-L-methionine = 5-methyluridine(54) in tRNA + S-adenosyl-L-homocysteine + H(+). It catalyses the reaction uridine(341) in tmRNA + S-adenosyl-L-methionine = 5-methyluridine(341) in tmRNA + S-adenosyl-L-homocysteine + H(+). In terms of biological role, dual-specificity methyltransferase that catalyzes the formation of 5-methyluridine at position 54 (m5U54) in all tRNAs, and that of position 341 (m5U341) in tmRNA (transfer-mRNA). The protein is tRNA/tmRNA (uracil-C(5))-methyltransferase of Shigella dysenteriae serotype 1 (strain Sd197).